The following is a 104-amino-acid chain: uncharacterized protein (104 aa).

Disordered regions lie at residues 1–20 (MTET…TTRK) and 83–104 (TASA…VAKK). Positions 83–93 (TASASSSGKKV) are enriched in low complexity. Positions 94–104 (VASKKKVVAKK) are enriched in basic residues.

This is an uncharacterized protein from Dictyostelium discoideum (Social amoeba).